The primary structure comprises 227 residues: Isopentenyl-diphosphate delta-isomerase 2 (227 aa).

Lysine 36 lines the substrate pocket. Histidine 40 and histidine 51 together coordinate Mg(2+). Positions 49–199 (LLHRAFSVVL…EVKVTPWLRT (151 aa)) constitute a Nudix hydrolase domain. 2 residues coordinate substrate: arginine 70 and lysine 74. Residue serine 86 is part of the active site. Serine 87 serves as a coordination point for substrate. Mg(2+)-binding residues include glutamate 146 and glutamate 148. Glutamate 148 is an active-site residue. Residues 225 to 227 (HRV) carry the Microbody targeting signal motif.

It belongs to the IPP isomerase type 1 family. It depends on Mg(2+) as a cofactor. In terms of tissue distribution, muscle-specific expression.

It localises to the peroxisome. The enzyme catalyses isopentenyl diphosphate = dimethylallyl diphosphate. It functions in the pathway isoprenoid biosynthesis; dimethylallyl diphosphate biosynthesis; dimethylallyl diphosphate from isopentenyl diphosphate: step 1/1. Catalyzes the 1,3-allylic rearrangement of the homoallylic substrate isopentenyl (IPP) to its highly electrophilic allylic isomer, dimethylallyl diphosphate (DMAPP). This is Isopentenyl-diphosphate delta-isomerase 2 (IDI2) from Homo sapiens (Human).